A 20-amino-acid polypeptide reads, in one-letter code: Pommaclein (20 aa).

The protein belongs to the GASA family. Expressed in pulp (aril) of fruits (at protein level).

The chain is Pommaclein from Punica granatum (Pomegranate).